We begin with the raw amino-acid sequence, 266 residues long: Glucosamine-6-phosphate deaminase (266 aa).

Residue Asp72 is the Proton acceptor; for enolization step of the active site. The active-site For ring-opening step is the Asp141. The active-site Proton acceptor; for ring-opening step is the His143. Residue Glu148 is the For ring-opening step of the active site.

It belongs to the glucosamine/galactosamine-6-phosphate isomerase family. NagB subfamily. In terms of assembly, homohexamer.

It catalyses the reaction alpha-D-glucosamine 6-phosphate + H2O = beta-D-fructose 6-phosphate + NH4(+). It functions in the pathway amino-sugar metabolism; N-acetylneuraminate degradation; D-fructose 6-phosphate from N-acetylneuraminate: step 5/5. Allosterically activated by N-acetylglucosamine 6-phosphate (GlcNAc6P). Its function is as follows. Catalyzes the reversible isomerization-deamination of glucosamine 6-phosphate (GlcN6P) to form fructose 6-phosphate (Fru6P) and ammonium ion. This Aliivibrio fischeri (strain ATCC 700601 / ES114) (Vibrio fischeri) protein is Glucosamine-6-phosphate deaminase.